Reading from the N-terminus, the 276-residue chain is 4-deoxy-L-threo-5-hexosulose-uronate ketol-isomerase (276 aa).

Positions 194, 196, 201, and 243 each coordinate Zn(2+).

The protein belongs to the KduI family. It depends on Zn(2+) as a cofactor.

The catalysed reaction is 5-dehydro-4-deoxy-D-glucuronate = 3-deoxy-D-glycero-2,5-hexodiulosonate. Its pathway is glycan metabolism; pectin degradation; 2-dehydro-3-deoxy-D-gluconate from pectin: step 4/5. Catalyzes the isomerization of 5-dehydro-4-deoxy-D-glucuronate to 3-deoxy-D-glycero-2,5-hexodiulosonate. In Halalkalibacterium halodurans (strain ATCC BAA-125 / DSM 18197 / FERM 7344 / JCM 9153 / C-125) (Bacillus halodurans), this protein is 4-deoxy-L-threo-5-hexosulose-uronate ketol-isomerase.